Reading from the N-terminus, the 539-residue chain is Cytochrome P450 monooxygenase tenB (539 aa).

The chain crosses the membrane as a helical span at residues 13–33 (LGYYEKVAGVLGFLSIALLFW). The tract at residues 439-460 (PFRFSRASKDDDDDGKSTSSHA) is disordered. C481 serves as a coordination point for heme.

This sequence belongs to the cytochrome P450 family. Heme is required as a cofactor.

It is found in the membrane. The protein operates within secondary metabolite biosynthesis. Functionally, cytochrome P450 monooxygenase; part of the gene cluster that mediates the biosynthesis of tenellin-type 2-pyridones, iron-chelating compounds involved in iron stress tolerance, competition with the natural competitor fungus Metarhizium robertsii and insect hosts infection. TenB catalyzes the selective N-hydroxylation of the 2-pyridone nitrogen of yield tellinin and 15-hydroxytellenin (15-HT), respectively. The pathway begins with the assembly of the polyketide-amino acid backbone by the hybrid PKS-NRPS tenS with the help of the enoyl reductase tenC. These enzymes catalyze the synthesis of the pyrrolidine-2-dione intermediates pretellinin A, 11-hydropretellenin A, 12-hydropretellenin A, 13-hydropretellenin A, 14-hydropretellenin A, 12-oxopretellenin A and prototellinin D. The cytochrome P450 monooxygenase tenA then catalyzes an oxidative ring expansion of pretenellin A and 14-hydropretellenin A to form the 2-pyridone core, leading to pretenellin B and pyridovericin, respectively. The cytochrome P450 monooxygenase tenB is then required for the selective N-hydroxylation of the 2-pyridone nitrogen of yield tellinin and 15-hydroxytellenin (15-HT), respectively. The UDP-glucosyltransferase GT1 and the methyltransferase MT1, located outside the tenS gene cluster, contribute to the stepwise glycosylation and methylation of 15-HT to obtain the glycoside pyridovericin-N-O-(4-O-methyl-beta-D-glucopyranoside) (PMGP). Additional related compounds such as 1-O-methyl-15-HT, (8Z)-1-O-methyl-15-HT, and O-methyltenellin A are also produced but the enzymes involved in their biosynthesis have still to be determined. This Beauveria bassiana (White muscardine disease fungus) protein is Cytochrome P450 monooxygenase tenB.